Consider the following 203-residue polypeptide: MTLRISGKSVSVGEALRGRVSDRTEEVLRKYFDGNYSGHITLSKDGFGFRTDCALHLDSGITLEADSNAPDAYASADQALVMIEKRLKRYKSRLKDRSARKAHVASAALAAMDATSYVLEAPGEGEDEDEVTGYSPVIIAEATTSLKQLSVSEAVMELDLSGAPCLVFQHGSSGRVNIIYRRADGNVGWVDPPGGKADGKAGG.

Belongs to the HPF/YfiA ribosome-associated protein family. Long HPF subfamily. In terms of assembly, interacts with 100S ribosomes.

The protein localises to the cytoplasm. Required for dimerization of active 70S ribosomes into 100S ribosomes in stationary phase; 100S ribosomes are translationally inactive and sometimes present during exponential growth. The protein is Ribosome hibernation promotion factor of Bradyrhizobium diazoefficiens (strain JCM 10833 / BCRC 13528 / IAM 13628 / NBRC 14792 / USDA 110).